The sequence spans 247 residues: Eukaryotic translation initiation factor 6-1 (247 aa).

Belongs to the eIF-6 family. As to quaternary structure, monomer. Associates with the 60S ribosomal subunit.

The protein localises to the cytoplasm. It is found in the nucleus. The protein resides in the nucleolus. In terms of biological role, binds to the 60S ribosomal subunit and prevents its association with the 40S ribosomal subunit to form the 80S initiation complex in the cytoplasm. May also be involved in ribosome biogenesis. The chain is Eukaryotic translation initiation factor 6-1 from Arabidopsis thaliana (Mouse-ear cress).